Consider the following 1406-residue polypeptide: DNA-directed RNA polymerase subunit beta' (1406 aa).

Zn(2+) contacts are provided by Cys70, Cys72, Cys85, and Cys88. Residues Asp460, Asp462, and Asp464 each contribute to the Mg(2+) site. Cys814, Cys888, Cys895, and Cys898 together coordinate Zn(2+).

It belongs to the RNA polymerase beta' chain family. As to quaternary structure, the RNAP catalytic core consists of 2 alpha, 1 beta, 1 beta' and 1 omega subunit. When a sigma factor is associated with the core the holoenzyme is formed, which can initiate transcription. The cofactor is Mg(2+). Zn(2+) serves as cofactor.

The catalysed reaction is RNA(n) + a ribonucleoside 5'-triphosphate = RNA(n+1) + diphosphate. In terms of biological role, DNA-dependent RNA polymerase catalyzes the transcription of DNA into RNA using the four ribonucleoside triphosphates as substrates. The protein is DNA-directed RNA polymerase subunit beta' of Photorhabdus laumondii subsp. laumondii (strain DSM 15139 / CIP 105565 / TT01) (Photorhabdus luminescens subsp. laumondii).